Here is a 419-residue protein sequence, read N- to C-terminus: Coiled-coil domain-containing protein 85C (419 aa).

A2 is subject to N-acetylalanine. 2 coiled-coil regions span residues 22–88 (ELLR…RELC) and 118–159 (HEVA…AALA). Disordered stretches follow at residues 162-268 (GAAS…DPSS) and 307-348 (HSES…AGQK). The segment covering 164–175 (ASGGGGGGGGAG) has biased composition (gly residues). Positions 176–189 (SRSSIDSQASLSGP) are enriched in low complexity. S178 carries the phosphoserine modification. Residues 224–233 (PPPLLPPGPH) show a composition bias toward pro residues. A Phosphoserine modification is found at S246. Residues 307–325 (HSESQLASLPPSYQDSLQN) show a composition bias toward polar residues. Residues 329-338 (CPAPELPSPP) show a composition bias toward pro residues.

It belongs to the CCDC85 family. May interact with ARVCF, CTNND1, CTNND2 and PKP4.

Its subcellular location is the cell junction. It is found in the tight junction. The protein resides in the adherens junction. In terms of biological role, may play a role in cell-cell adhesion and epithelium development through its interaction with proteins of the beta-catenin family. May play an important role in cortical development, especially in the maintenance of radial glia. This chain is Coiled-coil domain-containing protein 85C (CCDC85C), found in Homo sapiens (Human).